Reading from the N-terminus, the 269-residue chain is GTP cyclohydrolase FolE2 (269 aa).

It belongs to the GTP cyclohydrolase IV family.

It carries out the reaction GTP + H2O = 7,8-dihydroneopterin 3'-triphosphate + formate + H(+). It participates in cofactor biosynthesis; 7,8-dihydroneopterin triphosphate biosynthesis; 7,8-dihydroneopterin triphosphate from GTP: step 1/1. Its function is as follows. Converts GTP to 7,8-dihydroneopterin triphosphate. This is GTP cyclohydrolase FolE2 from Burkholderia ambifaria (strain ATCC BAA-244 / DSM 16087 / CCUG 44356 / LMG 19182 / AMMD) (Burkholderia cepacia (strain AMMD)).